The sequence spans 786 residues: Endonuclease MutS2 (786 aa).

Residue 333 to 340 (GPNTGGKT) coordinates ATP. Positions 682-709 (EKIKPSKQSAAQRPVVKVSGGGMSGPST) are disordered. Positions 711 to 786 (LDLRGERYDQ…GSGATIVNFK (76 aa)) constitute a Smr domain.

The protein belongs to the DNA mismatch repair MutS family. MutS2 subfamily. Homodimer. Binds to stalled ribosomes, contacting rRNA.

Its function is as follows. Endonuclease that is involved in the suppression of homologous recombination and thus may have a key role in the control of bacterial genetic diversity. Acts as a ribosome collision sensor, splitting the ribosome into its 2 subunits. Detects stalled/collided 70S ribosomes which it binds and splits by an ATP-hydrolysis driven conformational change. Acts upstream of the ribosome quality control system (RQC), a ribosome-associated complex that mediates the extraction of incompletely synthesized nascent chains from stalled ribosomes and their subsequent degradation. Probably generates substrates for RQC. The chain is Endonuclease MutS2 from Lacticaseibacillus casei (strain BL23) (Lactobacillus casei).